We begin with the raw amino-acid sequence, 297 residues long: Cyclin-dependent kinase 1 (297 aa).

The residue at position 1 (Met-1) is an N-acetylmethionine. Tyr-4 carries the phosphotyrosine; by PKR modification. The 284-residue stretch at 4-287 (YIKIEKIGEG…GKMALKHPYF (284 aa)) folds into the Protein kinase domain. Lys-6 and Lys-9 each carry N6-acetyllysine; alternate. Glycyl lysine isopeptide (Lys-Gly) (interchain with G-Cter in SUMO2); alternate cross-links involve residues Lys-6 and Lys-9. 10–18 (IGEGTYGVV) is an ATP binding site. Thr-14 is subject to Phosphothreonine. Phosphotyrosine; by PKMYT1, WEE1, WEE2 and PKC/PRKCD is present on Tyr-15. Phosphotyrosine; by WEE1 and WEE2 is present on Tyr-15. A Phosphotyrosine modification is found at Tyr-19. Lys-20 is covalently cross-linked (Glycyl lysine isopeptide (Lys-Gly) (interchain with G-Cter in SUMO2)). Lys-33 is an ATP binding site. A Phosphoserine modification is found at Ser-39. A Phosphotyrosine modification is found at Tyr-77. Catalysis depends on Asp-128, which acts as the Proton acceptor. Lys-139 is covalently cross-linked (Glycyl lysine isopeptide (Lys-Gly) (interchain with G-Cter in SUMO2)). Thr-141 carries the post-translational modification Phosphothreonine. Thr-161 is subject to Phosphothreonine; by CAK. At Ser-178 the chain carries Phosphoserine. A Phosphothreonine modification is found at Thr-222. At Lys-245 the chain carries N6-succinyllysine. Ser-248 is subject to Phosphoserine.

The protein belongs to the protein kinase superfamily. CMGC Ser/Thr protein kinase family. CDC2/CDKX subfamily. As to quaternary structure, forms a stable but non-covalent complex with a regulatory subunit and with a cyclin. Interacts with cyclins-B (CCNB1, CCNB2 and CCNB3) to form a serine/threonine kinase holoenzyme complex also known as maturation promoting factor (MPF). The cyclin subunit imparts substrate specificity to the complex. Can also form CDK1-cylin-D and CDK1-cyclin-E complexes that phosphorylate RB1 in vitro. Binds to RB1 and other transcription factors such as FOXO1 and RUNX2. Promotes G2-M transition when in complex with a cyclin-B. Interacts with DLGAP5. Binds to the CDK inhibitors CDKN1A/p21 and CDKN1B/p27. Isoform 2 is unable to complex with cyclin-B1 and also fails to bind to CDKN1A/p21. Interacts with catalytically active CCNB1 and RALBP1 during mitosis to form an endocytotic complex during interphase. Associates with cyclins-A and B1 during S-phase in regenerating hepatocytes. Interacts with FANCC. Interacts with CEP63; this interaction recruits CDK1 to centrosomes. Interacts with CENPA. Interacts with NR1D1. Interacts with proteasome subunit PSMA8; to participate in meiosis progression during spermatogenesis. In terms of processing, phosphorylation at Thr-161 by CAK/CDK7 activates kinase activity. Phosphorylation at Thr-14 and Tyr-15 by PKMYT1 prevents nuclear translocation. Phosphorylation at Tyr-15 by WEE1 and WEE2 inhibits the protein kinase activity and acts as a negative regulator of entry into mitosis (G2 to M transition). Phosphorylation by PKMYT1 and WEE1 takes place during mitosis to keep CDK1-cyclin-B complexes inactive until the end of G2. By the end of G2, PKMYT1 and WEE1 are inactivated, but CDC25A and CDC25B are activated. Dephosphorylation by active CDC25A and CDC25B at Thr-14 and Tyr-15, leads to CDK1 activation at the G2-M transition. Phosphorylation at Tyr-15 by WEE2 during oogenesis is required to maintain meiotic arrest in oocytes during the germinal vesicle (GV) stage, a long period of quiescence at dictyate prophase I, leading to prevent meiotic reentry. Phosphorylation by WEE2 is also required for metaphase II exit during egg activation to ensure exit from meiosis in oocytes and promote pronuclear formation. Phosphorylated at Tyr-4 by PKR/EIF2AK2 upon genotoxic stress. This phosphorylation triggers CDK1 polyubiquitination and subsequent proteolysis, thus leading to G2 arrest. In response to UV irradiation, phosphorylation at Tyr-15 by PRKCD activates the G2/M DNA damage checkpoint. Polyubiquitinated upon genotoxic stress.

Its subcellular location is the nucleus. It is found in the cytoplasm. The protein localises to the mitochondrion. The protein resides in the cytoskeleton. It localises to the microtubule organizing center. Its subcellular location is the centrosome. It is found in the spindle. The enzyme catalyses L-seryl-[protein] + ATP = O-phospho-L-seryl-[protein] + ADP + H(+). It carries out the reaction L-threonyl-[protein] + ATP = O-phospho-L-threonyl-[protein] + ADP + H(+). It catalyses the reaction [DNA-directed RNA polymerase] + ATP = phospho-[DNA-directed RNA polymerase] + ADP + H(+). Its activity is regulated as follows. Phosphorylation at Thr-14 or Tyr-15 inactivates the enzyme, while phosphorylation at Thr-161 activates it. Activated through a multistep process; binding to cyclin-B is required for relocation of cyclin-kinase complexes to the nucleus, activated by CAK/CDK7-mediated phosphorylation on Thr-161, and CDC25-mediated dephosphorylation of inhibitory phosphorylation on Thr-14 and Tyr-15. Activity is restricted during S-phase in an ATR-dependent manner to prevent premature entry into G2. Repressed by the CDK inhibitors CDKN1A/p21 and CDKN1B/p27 during the G1 phase and by CDKN1A/p21 at the G1-S checkpoint upon DNA damage. Transient activation by rapid and transient dephosphorylation at Tyr-15 triggered by TGFB1. Plays a key role in the control of the eukaryotic cell cycle by modulating the centrosome cycle as well as mitotic onset; promotes G2-M transition via association with multiple interphase cyclins. Phosphorylates PARVA/actopaxin, APC, AMPH, APC, BARD1, Bcl-xL/BCL2L1, BRCA2, CALD1, CASP8, CDC7, CDC20, CDC25A, CDC25C, CC2D1A, CENPA, CSNK2 proteins/CKII, FZR1/CDH1, CDK7, CEBPB, CHAMP1, DMD/dystrophin, EEF1 proteins/EF-1, EZH2, KIF11/EG5, EGFR, FANCG, FOS, GFAP, GOLGA2/GM130, GRASP1, UBE2A/hHR6A, HIST1H1 proteins/histone H1, HMGA1, HIVEP3/KRC, KAT5, LMNA, LMNB, LBR, MKI67, LATS1, MAP1B, MAP4, MARCKS, MCM2, MCM4, MKLP1, MLST8, MYB, NEFH, NFIC, NPC/nuclear pore complex, PITPNM1/NIR2, NPM1, NCL, NUCKS1, NPM1/numatrin, ORC1, PRKAR2A, EEF1E1/p18, EIF3F/p47, p53/TP53, NONO/p54NRB, PAPOLA, PLEC/plectin, RB1, TPPP, UL40/R2, RAB4A, RAP1GAP, RBBP8/CtIP, RCC1, RPS6KB1/S6K1, KHDRBS1/SAM68, ESPL1, SKI, BIRC5/survivin, STIP1, TEX14, beta-tubulins, MAPT/TAU, NEDD1, VIM/vimentin, TK1, FOXO1, RUNX1/AML1, SAMHD1, SIRT2, CGAS, ZAR1 and RUNX2. CDK1/CDC2-cyclin-B controls pronuclear union in interphase fertilized eggs. Essential for early stages of embryonic development. During G2 and early mitosis, CDC25A/B/C-mediated dephosphorylation activates CDK1/cyclin complexes which phosphorylate several substrates that trigger at least centrosome separation, Golgi dynamics, nuclear envelope breakdown and chromosome condensation. Once chromosomes are condensed and aligned at the metaphase plate, CDK1 activity is switched off by WEE1- and PKMYT1-mediated phosphorylation to allow sister chromatid separation, chromosome decondensation, reformation of the nuclear envelope and cytokinesis. Phosphorylates KRT5 during prometaphase and metaphase. Inactivated by PKR/EIF2AK2- and WEE1-mediated phosphorylation upon DNA damage to stop cell cycle and genome replication at the G2 checkpoint thus facilitating DNA repair. Reactivated after successful DNA repair through WIP1-dependent signaling leading to CDC25A/B/C-mediated dephosphorylation and restoring cell cycle progression. Catalyzes lamin (LMNA, LMNB1 and LMNB2) phosphorylation at the onset of mitosis, promoting nuclear envelope breakdown. In proliferating cells, CDK1-mediated FOXO1 phosphorylation at the G2-M phase represses FOXO1 interaction with 14-3-3 proteins and thereby promotes FOXO1 nuclear accumulation and transcription factor activity, leading to cell death of postmitotic neurons. The phosphorylation of beta-tubulins regulates microtubule dynamics during mitosis. NEDD1 phosphorylation promotes PLK1-mediated NEDD1 phosphorylation and subsequent targeting of the gamma-tubulin ring complex (gTuRC) to the centrosome, an important step for spindle formation. In addition, CC2D1A phosphorylation regulates CC2D1A spindle pole localization and association with SCC1/RAD21 and centriole cohesion during mitosis. The phosphorylation of Bcl-xL/BCL2L1 after prolongated G2 arrest upon DNA damage triggers apoptosis. In contrast, CASP8 phosphorylation during mitosis prevents its activation by proteolysis and subsequent apoptosis. This phosphorylation occurs in cancer cell lines, as well as in primary breast tissues and lymphocytes. EZH2 phosphorylation promotes H3K27me3 maintenance and epigenetic gene silencing. CALD1 phosphorylation promotes Schwann cell migration during peripheral nerve regeneration. CDK1-cyclin-B complex phosphorylates NCKAP5L and mediates its dissociation from centrosomes during mitosis. Regulates the amplitude of the cyclic expression of the core clock gene BMAL1 by phosphorylating its transcriptional repressor NR1D1, and this phosphorylation is necessary for SCF(FBXW7)-mediated ubiquitination and proteasomal degradation of NR1D1. Phosphorylates EML3 at 'Thr-881' which is essential for its interaction with HAUS augmin-like complex and TUBG1. Phosphorylates CGAS during mitosis, leading to its inhibition, thereby preventing CGAS activation by self DNA during mitosis. Phosphorylates SKA3 during mitosis which promotes SKA3 binding to the NDC80 complex and anchoring of the SKA complex to kinetochores, to enable stable attachment of mitotic spindle microtubules to kinetochores. The sequence is that of Cyclin-dependent kinase 1 (Cdk1) from Mus musculus (Mouse).